A 347-amino-acid polypeptide reads, in one-letter code: Chlorophyllase type 0 (347 aa).

Residues 1 to 19 (MAKLLLLIFGVFIFVNSQA) form the signal peptide. Positions 20-30 (QTFPTILEKHN) are excised as a propeptide. Residues 160–164 (GHSRG) carry the GXSXG motif. Residue Ser162 is the Nucleophile of the active site. Asp191 functions as the Charge relay system in the catalytic mechanism. N-linked (GlcNAc...) asparagine glycosylation is found at Asn215, Asn229, and Asn251. His262 (charge relay system) is an active-site residue. N-linked (GlcNAc...) asparagine glycosylation is present at Asn321.

Belongs to the AB hydrolase superfamily. Lipase family.

It catalyses the reaction a chlorophyll + H2O = a chlorophyllide + phytol + H(+). The enzyme catalyses chlorophyll a + H2O = phytol + chlorophyllide a + H(+). Its pathway is porphyrin-containing compound metabolism; chlorophyll degradation. Its activity is regulated as follows. Inhibited by diisopropyl fluorophosphate (DFP), phenylmethanesulfonyl fluoride (PMSF) or p-chloromercuribenzoic acid (PCMB), but not by N-ethylmaleimide (NEM) or iodoacetamide. In terms of biological role, catalyzes the hydrolysis of ester bond in chlorophyll to yield chlorophyllide and phytol. This is Chlorophyllase type 0 from Chenopodium album (Fat hen).